A 590-amino-acid polypeptide reads, in one-letter code: Arginine--tRNA ligase (590 aa).

The 'HIGH' region motif lies at 134–144; that stretch reads ANPTGPMHVGH.

The protein belongs to the class-I aminoacyl-tRNA synthetase family. In terms of assembly, monomer.

It is found in the cytoplasm. It catalyses the reaction tRNA(Arg) + L-arginine + ATP = L-arginyl-tRNA(Arg) + AMP + diphosphate. This Beijerinckia indica subsp. indica (strain ATCC 9039 / DSM 1715 / NCIMB 8712) protein is Arginine--tRNA ligase.